A 490-amino-acid polypeptide reads, in one-letter code: Sushi domain-containing protein 4 (490 aa).

Residues 1–21 (MYHGMNPSNGDGFLEQQQQQQ) are disordered. A signal peptide spans 1–41 (MYHGMNPSNGDGFLEQQQQQQQPQSPQRLLAVILWFQLALC). Residues 42-319 (FGPAQLTGGF…PSTHETLLTT (278 aa)) lie on the Extracellular side of the membrane. Sushi domains follow at residues 55–119 (QVCA…ICVQ), 120–179 (EDCR…ICQG), 178–239 (QGCL…RCLA), and 241–304 (EVCP…YCIK). Disulfide bonds link cysteine 57–cysteine 99, cysteine 85–cysteine 117, cysteine 122–cysteine 165, cysteine 147–cysteine 177, cysteine 180–cysteine 224, cysteine 210–cysteine 237, cysteine 243–cysteine 289, and cysteine 274–cysteine 302. Residues asparagine 104 and asparagine 134 are each glycosylated (N-linked (GlcNAc...) asparagine). A glycan (N-linked (GlcNAc...) asparagine) is linked at asparagine 192. Residues 320-340 (WKIVAFTATSVLLVLLLVILA) form a helical membrane-spanning segment. Topologically, residues 341-490 (RMFQTKFKAH…DEIPLMEEDP (150 aa)) are cytoplasmic. The disordered stretch occupies residues 401–490 (GCPLPVDDQS…DEIPLMEEDP (90 aa)). A compositionally biased stretch (polar residues) spans 430–456 (CDSVSGSSELLQSLYSPPRCQESTHPA). Over residues 479 to 490 (IADEIPLMEEDP) the composition is skewed to acidic residues.

Isoform 3 is the predominant isoform in all tissues except cortex, cerebellum, kidney, and breast. Isoform 1 is found primarily in the esophagus and the brain.

The protein resides in the membrane. The protein localises to the secreted. In terms of biological role, acts as a complement inhibitor by disrupting the formation of the classical C3 convertase. Isoform 3 inhibits the classical complement pathway, while membrane-bound isoform 1 inhibits deposition of C3b via both the classical and alternative complement pathways. The protein is Sushi domain-containing protein 4 (SUSD4) of Homo sapiens (Human).